A 601-amino-acid polypeptide reads, in one-letter code: Proline--tRNA ligase (601 aa).

This sequence belongs to the class-II aminoacyl-tRNA synthetase family. ProS type 1 subfamily. As to quaternary structure, homodimer.

It is found in the cytoplasm. It carries out the reaction tRNA(Pro) + L-proline + ATP = L-prolyl-tRNA(Pro) + AMP + diphosphate. Functionally, catalyzes the attachment of proline to tRNA(Pro) in a two-step reaction: proline is first activated by ATP to form Pro-AMP and then transferred to the acceptor end of tRNA(Pro). As ProRS can inadvertently accommodate and process non-cognate amino acids such as alanine and cysteine, to avoid such errors it has two additional distinct editing activities against alanine. One activity is designated as 'pretransfer' editing and involves the tRNA(Pro)-independent hydrolysis of activated Ala-AMP. The other activity is designated 'posttransfer' editing and involves deacylation of mischarged Ala-tRNA(Pro). The misacylated Cys-tRNA(Pro) is not edited by ProRS. The sequence is that of Proline--tRNA ligase from Tropheryma whipplei (strain TW08/27) (Whipple's bacillus).